The following is a 290-amino-acid chain: Ribosomal protein L11 methyltransferase (290 aa).

Residues Thr136, Gly157, Asp179, and Asn222 each coordinate S-adenosyl-L-methionine.

It belongs to the methyltransferase superfamily. PrmA family.

The protein localises to the cytoplasm. It catalyses the reaction L-lysyl-[protein] + 3 S-adenosyl-L-methionine = N(6),N(6),N(6)-trimethyl-L-lysyl-[protein] + 3 S-adenosyl-L-homocysteine + 3 H(+). Methylates ribosomal protein L11. In Porphyromonas gingivalis (strain ATCC BAA-308 / W83), this protein is Ribosomal protein L11 methyltransferase.